The primary structure comprises 1861 residues: Golgi-specific brefeldin A-resistance guanine nucleotide exchange factor 1 (1861 aa).

Positions 1-211 are DCB; DCB:DCB domain and DCB:HUS domain interaction; that stretch reads MVDKNIYIIQ…EPKSYVGTNM (211 aa). Positions 1 to 380 are interaction with RAB1B; the sequence is MVDKNIYIIQ…SVHDMDYVNP (380 aa). 2 disordered regions span residues 210–264 and 289–353; these read NMKK…LTGG and CTDS…VESI. The segment covering 227 to 241 has biased composition (basic residues); it reads WKKQKRSPRPPRHTT. Over residues 253–262 the composition is skewed to polar residues; the sequence is NGATLPSNLT. A phosphoserine mark is found at Ser-349 and Ser-352. Thr-507 bears the Phosphothreonine mark. Positions 530-550 are HUS; DCB:HUS domain interaction; the sequence is RIPSFVTELYINYDCDYYCSN. Residues 603 to 634 are disordered; it reads QEKKETARPGFEAVDGNPETNKSERATSDGKS. The region spanning 692–882 is the SEC7 domain; the sequence is ELIEIKNKKK…EDMYHAIKNE (191 aa). Residues 886 to 1372 are phosphatidylinositol-phosphate binding; required for translocation to the leading edge and for ARF1 activation upon GPCR signaling; it reads MPEEQTGLVR…LSRPGPSPLV (487 aa). The span at 1286–1296 shows a compositional bias: low complexity; sequence TARADAPDAGA. A disordered region spans residues 1286-1335; that stretch reads TARADAPDAGAQSDSELPSYHQNDVSLDRGYTSDSEVYTDHGRPGKIHRS. A compositionally biased stretch (polar residues) spans 1297 to 1310; sequence QSDSELPSYHQNDV. Ser-1298 is subject to Phosphoserine. The residue at position 1316 (Tyr-1316) is a Phosphotyrosine. A phosphoserine mark is found at Ser-1318, Ser-1320, and Ser-1335. At Thr-1337 the chain carries Phosphothreonine. 2 disordered regions span residues 1431-1486 and 1727-1812; these read GCKS…EGVP and PMPA…PLIL. Over residues 1434–1448 the composition is skewed to basic and acidic residues; it reads SQDKRSKSHKYDSKG. Residues Ser-1477, Ser-1775, and Ser-1786 each carry the phosphoserine modification. The span at 1776 to 1793 shows a compositional bias: low complexity; it reads TRAPSSSSPGSPMASSPS.

As to quaternary structure, can form homodimers and probably homotetramers. Interacts with COPG1; the interaction is independent on ARF1 activation. Interacts with ARF1, ARF3, ARF4 and ARF5. Interacts with RAB1B (GTP-bound form); required for GBF1 membrane association. Interacts with GGA1, GGA2 and GGA3. Interacts with USO1. Interacts (via SEC7 domain) with PNPLA2 (via C-terminus); the interaction is direct. Interacts with ARMH3.

Its subcellular location is the golgi apparatus. It localises to the cis-Golgi network. The protein resides in the endoplasmic reticulum-Golgi intermediate compartment. It is found in the trans-Golgi network. The protein localises to the cytoplasm. Its subcellular location is the lipid droplet. It localises to the membrane. Its function is as follows. Guanine-nucleotide exchange factor (GEF) for members of the Arf family of small GTPases involved in trafficking in the early secretory pathway; its GEF activity initiates the coating of nascent vesicles via the localized generation of activated ARFs through replacement of GDP with GTP. Recruitment to cis-Golgi membranes requires membrane association of Arf-GDP and can be regulated by ARF1, ARF3, ARF4 and ARF5. Involved in the recruitment of the COPI coat complex to the endoplasmic reticulum exit sites (ERES), and the endoplasmic reticulum-Golgi intermediate (ERGIC) and cis-Golgi compartments which implicates ARF1 activation. Involved in COPI vesicle-dependent retrograde transport from the ERGIC and cis-Golgi compartments to the endoplasmic reticulum (ER). Involved in the trans-Golgi network recruitment of GGA1, GGA2, GGA3, BIG1, BIG2, and the AP-1 adaptor protein complex related to chlathrin-dependent transport; the function requires its GEF activity (probably at least in part on ARF4 and ARF5). Has GEF activity towards ARF1. Has in vitro GEF activity towards ARF5. Involved in the processing of PSAP. Required for the assembly of the Golgi apparatus. The AMPK-phosphorylated form is involved in Golgi disassembly during mitotis and under stress conditions. May be involved in the COPI vesicle-dependent recruitment of PNPLA2 to lipid droplets; however, this function is under debate. In neutrophils, involved in G protein-coupled receptor (GPCR)-mediated chemotaxis und superoxide production. Proposed to be recruited by phosphatidylinositol-phosphates generated upon GPCR stimulation to the leading edge where it recruits and activates ARF1, and is involved in recruitment of GIT2 and the NADPH oxidase complex. Plays a role in maintaining mitochondrial morphology. The sequence is that of Golgi-specific brefeldin A-resistance guanine nucleotide exchange factor 1 from Mus musculus (Mouse).